Here is a 442-residue protein sequence, read N- to C-terminus: D-serine dehydratase 1 (442 aa).

Lysine 118 is modified (N6-(pyridoxal phosphate)lysine).

It belongs to the serine/threonine dehydratase family. DsdA subfamily. Monomer. It depends on pyridoxal 5'-phosphate as a cofactor.

The enzyme catalyses D-serine = pyruvate + NH4(+). This is D-serine dehydratase 1 from Escherichia coli (strain UTI89 / UPEC).